The chain runs to 318 residues: Olfactory receptor 13C7 (318 aa).

Residues 1 to 27 (MVSANQTASVTEFILLGLSAHPKLEKT) are Extracellular-facing. Residues 28-48 (FFVLILLMYLVILLGNGVLIL) traverse the membrane as a helical segment. At 49–61 (MTVSNSHLHMPMY) the chain is on the cytoplasmic side. The chain crosses the membrane as a helical span at residues 62–82 (FFLGNLSFLDICYTTSSVPLI). The Extracellular portion of the chain corresponds to 83–100 (LDSFLTPRKTISFSACAV). Residues 101–121 (QMFLSFAMGATECVLLSMMAF) traverse the membrane as a helical segment. Topologically, residues 122 to 181 (DRYVAICNPLRYPVVMSKAAYMPKAAGSWVAGSTASMVQTSLAMRLPFCGDNIINHFTCE) are cytoplasmic. Residues 182–202 (ILAVLKLACADISVNVISMGV) traverse the membrane as a helical segment. Over 203-205 (TNV) the chain is Extracellular. A helical transmembrane segment spans residues 206–226 (IFLGVPVLFISFSYVFIIATI). Topologically, residues 227–238 (LRIPSAEGRKKA) are cytoplasmic. The helical transmembrane segment at 239–259 (FSTCSAHLTVVVIFYGTILFM) threads the bilayer. The Extracellular portion of the chain corresponds to 260–278 (YGKPKSKDPLGADKQDLAD). The chain crosses the membrane as a helical span at residues 279 to 289 (KLISLFYGVVT). Residues 290–318 (PMLNPIIYSLRNKDVKAAVRDLIFQKCFA) lie on the Cytoplasmic side of the membrane.

Belongs to the G-protein coupled receptor 1 family.

It localises to the cell membrane. Functionally, odorant receptor. The sequence is that of Olfactory receptor 13C7 from Homo sapiens (Human).